The chain runs to 318 residues: Endochitinase 1 (318 aa).

The signal sequence occupies residues 1-18 (EFTTLFLLFSVLLLSASA). The region spanning 19–60 (EQCGSQAGGALCASGLCCSKFGWCGDTNDYCGPGNCQSQCPG) is the Chitin-binding type-1 domain. 7 disulfides stabilise this stretch: Cys21-Cys36, Cys30-Cys42, Cys35-Cys49, Cys54-Cys58, Cys89-Cys152, Cys164-Cys172, and Cys271-Cys303. Glu134 (proton donor) is an active-site residue. The propeptide at 312-318 (GLLVDTM) is removed in mature form, vacuolar targeting.

It belongs to the glycosyl hydrolase 19 family. Chitinase class I subfamily.

It is found in the vacuole. The enzyme catalyses Random endo-hydrolysis of N-acetyl-beta-D-glucosaminide (1-&gt;4)-beta-linkages in chitin and chitodextrins.. Functionally, defense against chitin-containing fungal pathogens. The protein is Endochitinase 1 (CHTB1) of Solanum tuberosum (Potato).